The following is a 1405-amino-acid chain: Rho guanine nucleotide exchange factor 18 (1405 aa).

Disordered regions lie at residues 1–47, 92–115, and 289–330; these read MGSE…EDGF, ETHRQEARRESSHTSCEGASALPQ, and PGKS…PGKR. Basic and acidic residues-rich tracts occupy residues 92–103 and 308–330; these read ETHRQEARRESS and RQKEKGKSPAHLKDKTQDLPGKR. The segment at 347-372 adopts a C2H2-type; degenerate zinc-finger fold; the sequence is SSCPLCGEPLLNSASLKEHPRTTLLS. Residues 485 to 682 enclose the DH domain; the sequence is KRQDVLYELM…KDIISQVDAK (198 aa). The PH domain maps to 723-825; the sequence is QLHLEGALCW…WMAHIRRAVE (103 aa). The disordered stretch occupies residues 936–1016; it reads QVEEGSVSAG…PQAVEMPSTE (81 aa). The residue at position 952 (threonine 952) is a Phosphothreonine. Serine 961 is subject to Phosphoserine. Residues 1084–1181 are a coiled coil; it reads FEKQREERAG…RERLELLRRF (98 aa). Disordered stretches follow at residues 1198–1242, 1274–1309, and 1328–1405; these read EAQP…VERP, RQTAVQQQIPTKLAASTKGGKEKGSKSRGSQRWESS, and ESAS…VIFF. Phosphoserine occurs at positions 1336 and 1338. Pro residues predominate over residues 1355–1365; the sequence is FPAPSPAPAAT. The span at 1375 to 1394 shows a compositional bias: low complexity; it reads TSLPPVSPASSLPTTPLATT. The span at 1396–1405 shows a compositional bias: basic and acidic residues; the sequence is EVSKEDVIFF.

As to quaternary structure, interacts with SEPT9; interaction may inhibit GEF activity. Interacts with Gbetagamma subunits GNB1 and GNG2. Interacts with EPB41L4B. Interacts with PATJ (via C-terminus).

The protein localises to the cytoplasm. It localises to the cytoskeleton. It is found in the cell membrane. Its subcellular location is the apical cell membrane. Its function is as follows. Acts as a guanine nucleotide exchange factor (GEF) for RhoA GTPases. May play a role in actin cytoskeleton reorganization in different tissues since its activation induces formation of actin stress fibers. Also acts as a GEF for RAC1, inducing production of reactive oxygen species (ROS). Does not act as a GEF for CDC42. The G protein beta-gamma (Gbetagamma) subunits of heterotrimeric G proteins act as activators, explaining the integrated effects of LPA and other G-protein coupled receptor agonists on actin stress fiber formation, cell shape change and ROS production. Required for EPB41L4B-mediated regulation of the circumferential actomyosin belt in epithelial cells. This chain is Rho guanine nucleotide exchange factor 18 (Arhgef18), found in Mus musculus (Mouse).